The following is a 137-amino-acid chain: Envelope glycoprotein L (137 aa).

An N-terminal signal peptide occupies residues 1-22 (MRAVGVFLAICLVTIFVLPTWG). The tract at residues 23-128 (NWAYPCCHVT…SVEDLFGANL (106 aa)) is interaction with gH. Cystine bridges form between cysteine 28–cysteine 56 and cysteine 29–cysteine 79.

It belongs to the herpesviridae glycoprotein L family. As to quaternary structure, interacts with glycoprotein H (gH); this interaction is necessary for the correct processing and cell surface expression of gH. The heterodimer gH/gL seems to interact with gB trimers during fusion. The heterodimer gH/gL interacts with host EPHA2 to facilitate virus internalization and fusion.

The protein resides in the virion membrane. Its subcellular location is the host cell membrane. It localises to the host Golgi apparatus. It is found in the host trans-Golgi network. In terms of biological role, the heterodimer glycoprotein H-glycoprotein L is required for the fusion of viral and plasma membranes leading to virus entry into the host cell. Acts as a functional inhibitor of gH and maintains gH in an inhibited form. Upon binding to host integrins, gL dissociates from gH leading to activation of the viral fusion glycoproteins gB and gH. Fusion of EBV with B-lymphocytes requires the additional receptor-binding protein gp42, which forms a complex with gH/gL. The heterodimer gH/gL targets also host EPHA2 to promote viral entry. This Homo sapiens (Human) protein is Envelope glycoprotein L.